The chain runs to 280 residues: Pantothenate synthetase (280 aa).

Residue 30–37 (MGYLHEGH) coordinates ATP. His-37 serves as the catalytic Proton donor. Gln-61 is a binding site for (R)-pantoate. Gln-61 serves as a coordination point for beta-alanine. An ATP-binding site is contributed by 147 to 150 (GQKD). Gln-153 contributes to the (R)-pantoate binding site. ATP-binding positions include Val-176 and 184–187 (MSSR).

It belongs to the pantothenate synthetase family. In terms of assembly, homodimer.

The protein localises to the cytoplasm. It carries out the reaction (R)-pantoate + beta-alanine + ATP = (R)-pantothenate + AMP + diphosphate + H(+). It participates in cofactor biosynthesis; (R)-pantothenate biosynthesis; (R)-pantothenate from (R)-pantoate and beta-alanine: step 1/1. Functionally, catalyzes the condensation of pantoate with beta-alanine in an ATP-dependent reaction via a pantoyl-adenylate intermediate. The polypeptide is Pantothenate synthetase (Thermosipho melanesiensis (strain DSM 12029 / CIP 104789 / BI429)).